Here is a 371-residue protein sequence, read N- to C-terminus: DNA replication and repair protein RecF (371 aa).

ATP is bound at residue 30-37; that stretch reads GANAQGKT.

The protein belongs to the RecF family.

It localises to the cytoplasm. The RecF protein is involved in DNA metabolism; it is required for DNA replication and normal SOS inducibility. RecF binds preferentially to single-stranded, linear DNA. It also seems to bind ATP. This is DNA replication and repair protein RecF from Lacticaseibacillus casei (strain BL23) (Lactobacillus casei).